The chain runs to 161 residues: Tropomyosin (161 aa).

Residues 1–161 are a coiled coil; that stretch reads MDKLREKINA…DEVHQALEDL (161 aa). Positions 40–52 are enriched in basic and acidic residues; sequence EQEYESLSRKSEA. Disordered regions lie at residues 40–65 and 107–134; these read EQEYESLSRKSEAAESQLEELEEETK and EKMRQTDVKAEHFERRVQSLERERDDME.

As to quaternary structure, homodimer.

It localises to the cytoplasm. The protein localises to the cytoskeleton. Functionally, forms part of the F-actin contractile ring during cytokinesis. This is Tropomyosin (cdc8) from Schizosaccharomyces pombe (strain 972 / ATCC 24843) (Fission yeast).